We begin with the raw amino-acid sequence, 347 residues long: Ribosomal RNA small subunit methyltransferase H (347 aa).

S-adenosyl-L-methionine-binding positions include 50–52, aspartate 69, phenylalanine 96, aspartate 125, and glutamine 132; that span reads GGH.

The protein belongs to the methyltransferase superfamily. RsmH family.

It is found in the cytoplasm. The catalysed reaction is cytidine(1402) in 16S rRNA + S-adenosyl-L-methionine = N(4)-methylcytidine(1402) in 16S rRNA + S-adenosyl-L-homocysteine + H(+). Specifically methylates the N4 position of cytidine in position 1402 (C1402) of 16S rRNA. The sequence is that of Ribosomal RNA small subunit methyltransferase H from Corynebacterium aurimucosum (strain ATCC 700975 / DSM 44827 / CIP 107346 / CN-1) (Corynebacterium nigricans).